Consider the following 371-residue polypeptide: Queuine tRNA-ribosyltransferase (371 aa).

Residue aspartate 92 is the Proton acceptor of the active site. Residues 92–96 (DSGGF), aspartate 147, glutamine 190, and glycine 217 each bind substrate. The segment at 248–254 (GVGKPID) is RNA binding. The Nucleophile role is filled by aspartate 267. Positions 272-276 (TRSGR) are RNA binding; important for wobble base 34 recognition.

Belongs to the queuine tRNA-ribosyltransferase family. Homodimer. Within each dimer, one monomer is responsible for RNA recognition and catalysis, while the other monomer binds to the replacement base PreQ1.

It carries out the reaction 7-aminomethyl-7-carbaguanine + guanosine(34) in tRNA = 7-aminomethyl-7-carbaguanosine(34) in tRNA + guanine. It participates in tRNA modification; tRNA-queuosine biosynthesis. Its function is as follows. Catalyzes the base-exchange of a guanine (G) residue with the queuine precursor 7-aminomethyl-7-deazaguanine (PreQ1) at position 34 (anticodon wobble position) in tRNAs with GU(N) anticodons (tRNA-Asp, -Asn, -His and -Tyr). Catalysis occurs through a double-displacement mechanism. The nucleophile active site attacks the C1' of nucleotide 34 to detach the guanine base from the RNA, forming a covalent enzyme-RNA intermediate. The proton acceptor active site deprotonates the incoming PreQ1, allowing a nucleophilic attack on the C1' of the ribose to form the product. After dissociation, two additional enzymatic reactions on the tRNA convert PreQ1 to queuine (Q), resulting in the hypermodified nucleoside queuosine (7-(((4,5-cis-dihydroxy-2-cyclopenten-1-yl)amino)methyl)-7-deazaguanosine). In Caulobacter vibrioides (strain ATCC 19089 / CIP 103742 / CB 15) (Caulobacter crescentus), this protein is Queuine tRNA-ribosyltransferase.